Consider the following 314-residue polypeptide: Ribonuclease Z (314 aa).

Residues His63, His65, Asp67, His68, His142, Asp205, and His263 each coordinate Zn(2+). Asp67 serves as the catalytic Proton acceptor.

The protein belongs to the RNase Z family. As to quaternary structure, homodimer. Zn(2+) is required as a cofactor.

It catalyses the reaction Endonucleolytic cleavage of RNA, removing extra 3' nucleotides from tRNA precursor, generating 3' termini of tRNAs. A 3'-hydroxy group is left at the tRNA terminus and a 5'-phosphoryl group is left at the trailer molecule.. Zinc phosphodiesterase, which displays some tRNA 3'-processing endonuclease activity. Probably involved in tRNA maturation, by removing a 3'-trailer from precursor tRNA. In Kineococcus radiotolerans (strain ATCC BAA-149 / DSM 14245 / SRS30216), this protein is Ribonuclease Z.